A 733-amino-acid chain; its full sequence is Methionine--tRNA ligase (733 aa).

A 'HIGH' region motif is present at residues 11–21; sequence PYANGPIHAGH. Zn(2+) contacts are provided by Cys-143, Cys-146, Cys-156, and Cys-159. A 'KMSKS' region motif is present at residues 345 to 349; that stretch reads KFSTS. Residue Thr-348 coordinates ATP. A tRNA-binding domain is found at 633-733; sequence DFMKLDLRVG…KEVKLGARIR (101 aa).

Belongs to the class-I aminoacyl-tRNA synthetase family. MetG type 1 subfamily. Homodimer. Requires Zn(2+) as cofactor.

The protein resides in the cytoplasm. The enzyme catalyses tRNA(Met) + L-methionine + ATP = L-methionyl-tRNA(Met) + AMP + diphosphate. Functionally, is required not only for elongation of protein synthesis but also for the initiation of all mRNA translation through initiator tRNA(fMet) aminoacylation. In Thermococcus onnurineus (strain NA1), this protein is Methionine--tRNA ligase.